The sequence spans 437 residues: Probable indole-3-pyruvate monooxygenase YUCCA3 (437 aa).

41–46 is a binding site for FAD; the sequence is GAGPSG. 212 to 217 contributes to the NADP(+) binding site; sequence GCGNSG.

The protein belongs to the FMO family. It depends on FAD as a cofactor.

The enzyme catalyses indole-3-pyruvate + NADPH + O2 + H(+) = (indol-3-yl)acetate + CO2 + NADP(+) + H2O. Its pathway is plant hormone metabolism; auxin biosynthesis. Functionally, involved in auxin biosynthesis. Belongs to the set of redundant YUCCA genes probably responsible for auxin biosynthesis in roots. The polypeptide is Probable indole-3-pyruvate monooxygenase YUCCA3 (YUC3) (Arabidopsis thaliana (Mouse-ear cress)).